Reading from the N-terminus, the 712-residue chain is uncharacterized protein (712 aa).

3 disordered regions span residues 1-46 (MAKI…NNLN), 107-264 (NIKP…IPQA), and 370-389 (QPQHQQNQQNQQNQQNQQNQ). Low complexity-rich tracts occupy residues 10 to 46 (INNSLNLNNSNSNSNSNSSININNNNNSNNSNNNNLN), 107 to 143 (NIKPSQQNSPQNNSNSNNINININNNSNNGNSTSNSS), and 161 to 173 (TFDNQQTSNNSSN). Polar residues predominate over residues 178–187 (ISPTTSPQLE). Composition is skewed to low complexity over residues 188–198 (QHQQYQQQQHQ) and 241–264 (PLQQQQQPQPQQQPQPQQQQIPQA).

This is an uncharacterized protein from Dictyostelium discoideum (Social amoeba).